Here is a 264-residue protein sequence, read N- to C-terminus: Thymidylate synthase (264 aa).

Arg21 provides a ligand contact to dUMP. Position 51 (His51) interacts with (6R)-5,10-methylene-5,6,7,8-tetrahydrofolate. Position 126–127 (126–127) interacts with dUMP; that stretch reads RR. Cys146 acts as the Nucleophile in catalysis. DUMP contacts are provided by residues 166–169, Asn177, and 207–209; these read RSAD and HLY. Asp169 contacts (6R)-5,10-methylene-5,6,7,8-tetrahydrofolate. Ala263 serves as a coordination point for (6R)-5,10-methylene-5,6,7,8-tetrahydrofolate.

Belongs to the thymidylate synthase family. Bacterial-type ThyA subfamily. As to quaternary structure, homodimer.

Its subcellular location is the cytoplasm. The catalysed reaction is dUMP + (6R)-5,10-methylene-5,6,7,8-tetrahydrofolate = 7,8-dihydrofolate + dTMP. It participates in pyrimidine metabolism; dTTP biosynthesis. Functionally, catalyzes the reductive methylation of 2'-deoxyuridine-5'-monophosphate (dUMP) to 2'-deoxythymidine-5'-monophosphate (dTMP) while utilizing 5,10-methylenetetrahydrofolate (mTHF) as the methyl donor and reductant in the reaction, yielding dihydrofolate (DHF) as a by-product. This enzymatic reaction provides an intracellular de novo source of dTMP, an essential precursor for DNA biosynthesis. This is Thymidylate synthase from Hahella chejuensis (strain KCTC 2396).